A 330-amino-acid polypeptide reads, in one-letter code: Ketol-acid reductoisomerase (NADP(+)) (330 aa).

The 181-residue stretch at methionine 1–threonine 181 folds into the KARI N-terminal Rossmann domain. NADP(+)-binding positions include tyrosine 24 to glutamine 27, lysine 47, serine 50, serine 52, and aspartate 82 to glutamine 85. Histidine 107 is an active-site residue. Position 133 (glycine 133) interacts with NADP(+). Positions serine 182–leucine 327 constitute a KARI C-terminal knotted domain. 4 residues coordinate Mg(2+): aspartate 190, glutamate 194, glutamate 226, and glutamate 230. Position 251 (serine 251) interacts with substrate.

The protein belongs to the ketol-acid reductoisomerase family. Mg(2+) is required as a cofactor.

The enzyme catalyses (2R)-2,3-dihydroxy-3-methylbutanoate + NADP(+) = (2S)-2-acetolactate + NADPH + H(+). It carries out the reaction (2R,3R)-2,3-dihydroxy-3-methylpentanoate + NADP(+) = (S)-2-ethyl-2-hydroxy-3-oxobutanoate + NADPH + H(+). It functions in the pathway amino-acid biosynthesis; L-isoleucine biosynthesis; L-isoleucine from 2-oxobutanoate: step 2/4. The protein operates within amino-acid biosynthesis; L-valine biosynthesis; L-valine from pyruvate: step 2/4. Its function is as follows. Involved in the biosynthesis of branched-chain amino acids (BCAA). Catalyzes an alkyl-migration followed by a ketol-acid reduction of (S)-2-acetolactate (S2AL) to yield (R)-2,3-dihydroxy-isovalerate. In the isomerase reaction, S2AL is rearranged via a Mg-dependent methyl migration to produce 3-hydroxy-3-methyl-2-ketobutyrate (HMKB). In the reductase reaction, this 2-ketoacid undergoes a metal-dependent reduction by NADPH to yield (R)-2,3-dihydroxy-isovalerate. This Chlorobaculum tepidum (strain ATCC 49652 / DSM 12025 / NBRC 103806 / TLS) (Chlorobium tepidum) protein is Ketol-acid reductoisomerase (NADP(+)).